Here is a 376-residue protein sequence, read N- to C-terminus: 1-deoxy-D-xylulose 5-phosphate reductoisomerase (376 aa).

Positions 12, 13, 14, 15, 39, and 116 each coordinate NADPH. Lys117 is a binding site for 1-deoxy-D-xylulose 5-phosphate. Residue Glu118 coordinates NADPH. Position 142 (Asp142) interacts with Mn(2+). Residues Ser143, Glu144, Ser164, and His187 each coordinate 1-deoxy-D-xylulose 5-phosphate. Glu144 lines the Mn(2+) pocket. Gly193 is a binding site for NADPH. 1-deoxy-D-xylulose 5-phosphate is bound by residues Ser200, Asn205, Lys206, and Glu209. Residue Glu209 coordinates Mn(2+).

It belongs to the DXR family. Requires Mg(2+) as cofactor. Mn(2+) serves as cofactor.

It carries out the reaction 2-C-methyl-D-erythritol 4-phosphate + NADP(+) = 1-deoxy-D-xylulose 5-phosphate + NADPH + H(+). It functions in the pathway isoprenoid biosynthesis; isopentenyl diphosphate biosynthesis via DXP pathway; isopentenyl diphosphate from 1-deoxy-D-xylulose 5-phosphate: step 1/6. Catalyzes the NADPH-dependent rearrangement and reduction of 1-deoxy-D-xylulose-5-phosphate (DXP) to 2-C-methyl-D-erythritol 4-phosphate (MEP). This chain is 1-deoxy-D-xylulose 5-phosphate reductoisomerase, found in Thermotoga maritima (strain ATCC 43589 / DSM 3109 / JCM 10099 / NBRC 100826 / MSB8).